The chain runs to 1320 residues: Bifunctional protein PutA (1320 aa).

A proline dehydrogenase region spans residues 228-574 (LSRSLNRIIG…SFVNRIADAT (347 aa)). The interval 653-1119 (QPVADGEMTP…LAHRPPNALN (467 aa)) is aldehyde dehydrogenase. Active-site residues include Glu-883 and Cys-917.

It in the N-terminal section; belongs to the proline dehydrogenase family. The protein in the C-terminal section; belongs to the aldehyde dehydrogenase family. The cofactor is FAD.

The enzyme catalyses L-proline + a quinone = (S)-1-pyrroline-5-carboxylate + a quinol + H(+). It carries out the reaction L-glutamate 5-semialdehyde + NAD(+) + H2O = L-glutamate + NADH + 2 H(+). Its pathway is amino-acid degradation; L-proline degradation into L-glutamate; L-glutamate from L-proline: step 1/2. It participates in amino-acid degradation; L-proline degradation into L-glutamate; L-glutamate from L-proline: step 2/2. In terms of biological role, oxidizes proline to glutamate for use as a carbon and nitrogen source and also function as a transcriptional repressor of the put operon. This Salmonella typhimurium (strain LT2 / SGSC1412 / ATCC 700720) protein is Bifunctional protein PutA (putA).